Consider the following 272-residue polypeptide: 1,4-dihydroxy-2-naphthoyl-CoA synthase (272 aa).

Substrate contacts are provided by residues arginine 33, 72–76, tyrosine 84, 116–120, threonine 142, serine 148, tyrosine 245, and lysine 260; these read SGGDQ and YAIGG. Hydrogencarbonate is bound at residue 141-143; the sequence is QTG. Residues 253-264 show a composition bias toward basic and acidic residues; that stretch reads GRDAFKEKRDPD. The tract at residues 253 to 272 is disordered; sequence GRDAFKEKRDPDFDQFPKFP.

Belongs to the enoyl-CoA hydratase/isomerase family. MenB subfamily. Hydrogencarbonate is required as a cofactor.

It carries out the reaction 2-succinylbenzoyl-CoA + H(+) = 1,4-dihydroxy-2-naphthoyl-CoA + H2O. The protein operates within quinol/quinone metabolism; 1,4-dihydroxy-2-naphthoate biosynthesis; 1,4-dihydroxy-2-naphthoate from chorismate: step 6/7. Its pathway is quinol/quinone metabolism; menaquinone biosynthesis. Its function is as follows. Converts o-succinylbenzoyl-CoA (OSB-CoA) to 1,4-dihydroxy-2-naphthoyl-CoA (DHNA-CoA). The chain is 1,4-dihydroxy-2-naphthoyl-CoA synthase from Staphylococcus haemolyticus (strain JCSC1435).